We begin with the raw amino-acid sequence, 355 residues long: Blue-sensitive opsin (355 aa).

Over 1 to 36 (MNGTEGINFYVPLSNKTGLVRSPFEYPQYYLAEPWK) the chain is Extracellular. Asn2 and Asn15 each carry an N-linked (GlcNAc...) asparagine glycan. Residues 37–61 (YKVVCCYIFFLIFTGLPINILTLLV) traverse the membrane as a helical segment. Residues 62–73 (TFKHKKLRQPLN) are Cytoplasmic-facing. A helical membrane pass occupies residues 74–98 (YILVNLAVADLFMACFGFTVTFYTA). The Extracellular portion of the chain corresponds to 99 to 113 (WNGYFIFGPIGCAIE). Cysteines 110 and 187 form a disulfide. The helical transmembrane segment at 114 to 133 (GFFATLGGQVALWSLVVLAI) threads the bilayer. Residues 134–152 (ERYIVVCKPMGNFRFSATH) are Cytoplasmic-facing. Residues 153–176 (ALMGISFTWFMSFSCAAPPLLGWS) traverse the membrane as a helical segment. The Extracellular portion of the chain corresponds to 177–202 (RYIPEGMQCSCGPDYYTLNPDYHNES). N-linked (GlcNAc...) asparagine glycosylation is present at Asn200. A helical membrane pass occupies residues 203 to 230 (YVLYMFGVHFVIPVVVIFFSYGRLICKV). At 231 to 252 (REAAAQQQESASTQKAEREVTR) the chain is on the cytoplasmic side. Residues 253 to 276 (MVILMVLGFLLAWTPYAMVAFWIF) traverse the membrane as a helical segment. At 277–284 (TNKGVDFS) the chain is on the extracellular side. A helical transmembrane segment spans residues 285–309 (ATLMSVPAFFSKSSSLYNPIIYVLM). At Lys296 the chain carries N6-(retinylidene)lysine. At 310–355 (NKQFRNCMITTICCGKNPFGDEDVSSSVSQSKTEVSSVSSSQVSPA) the chain is on the cytoplasmic side. Residues Cys322 and Cys323 are each lipidated (S-palmitoyl cysteine). A disordered region spans residues 332-355 (DVSSSVSQSKTEVSSVSSSQVSPA). Residues 334–355 (SSSVSQSKTEVSSVSSSQVSPA) are compositionally biased toward low complexity.

The protein belongs to the G-protein coupled receptor 1 family. Opsin subfamily. In terms of processing, phosphorylated on some or all of the serine and threonine residues present in the C-terminal region.

It is found in the membrane. In terms of biological role, visual pigments are the light-absorbing molecules that mediate vision. They consist of an apoprotein, opsin, covalently linked to cis-retinal. This opsin uses a vitamin A2 chromophore. This Anolis carolinensis (Green anole) protein is Blue-sensitive opsin.